We begin with the raw amino-acid sequence, 342 residues long: Replication factor C subunit 4 (342 aa).

ATP-binding positions include valine 24, valine 36, glycine 61–threonine 68, asparagine 157, and arginine 215.

Belongs to the activator 1 small subunits family. Heteropentamer of subunits rfc1, rfc2, rfc3, rfc4 and rfc5 that forms a complex (RFC) with PCNA in the presence of ATP. Two other complexes exist where rfc1 can be replaced by either ctf18 or elg1 to form the ctf18-RFC or the elg1-RFC complexes respectively.

The protein localises to the nucleus. Its function is as follows. The elongation of primed DNA templates by DNA polymerase delta and epsilon requires the action of the accessory proteins PCNA and activator 1. This is Replication factor C subunit 4 (rfc4) from Schizosaccharomyces pombe (strain 972 / ATCC 24843) (Fission yeast).